Consider the following 161-residue polypeptide: uncharacterized protein (161 aa).

The interval 126-161 (TPSNCGESSTSSGQSSGDESNCSLRTHGVYTRGEQH) is disordered. Residues 128-148 (SNCGESSTSSGQSSGDESNCS) show a composition bias toward low complexity.

The protein belongs to the herpesviridae US1 family.

This is an uncharacterized protein from Human cytomegalovirus (strain AD169) (HHV-5).